A 95-amino-acid polypeptide reads, in one-letter code: Opiscorpine-2 (95 aa).

The first 19 residues, 1–19, serve as a signal peptide directing secretion; it reads MNNKLTALIFHGLLAIASC. The region spanning 55 to 95 is the BetaSPN-type CS-alpha/beta domain; sequence EFMCMANMDPTGSCETHCQKASGEKGYCHGTKCKCGVPLSY. Cystine bridges form between C58-C82, C68-C87, and C72-C89.

The protein belongs to the long chain scorpion toxin family. Class 3 subfamily. As to expression, expressed by the venom gland.

The protein resides in the secreted. In terms of biological role, has antimicrobial activity against yeasts and bacteria. This chain is Opiscorpine-2, found in Opistophthalmus carinatus (African yellow leg scorpion).